Consider the following 424-residue polypeptide: Glucan endo-1,3-alpha-glucosidase agn1 (424 aa).

The N-terminal stretch at 1-20 (MKLVLFLVLLFSALINLTNA) is a signal peptide.

Belongs to the glycosyl hydrolase 71 family. Monomer. Post-translationally, not glycosylated.

The protein resides in the secreted. Its subcellular location is the cell wall. It carries out the reaction Endohydrolysis of (1-&gt;3)-alpha-D-glucosidic linkages in isolichenin, pseudonigeran and nigeran.. Its function is as follows. Has a role in cell separation where it is required for the degradation of the cell wall material surrounding the septum (the septum edging) which must be hydrolyzed before full separation of the daughter cells can occur. Hydrolyzes 1,3-alpha-glucan predominantly into pentasaccharides. This Schizosaccharomyces pombe (strain 972 / ATCC 24843) (Fission yeast) protein is Glucan endo-1,3-alpha-glucosidase agn1 (agn1).